The following is a 173-amino-acid chain: 2-C-methyl-D-erythritol 2,4-cyclodiphosphate synthase (173 aa).

Residues aspartate 17 and histidine 19 each contribute to the a divalent metal cation site. 4-CDP-2-C-methyl-D-erythritol 2-phosphate is bound by residues aspartate 17–histidine 19 and histidine 49–serine 50. Histidine 57 is a binding site for a divalent metal cation. 4-CDP-2-C-methyl-D-erythritol 2-phosphate-binding positions include phenylalanine 76–aspartate 80, threonine 147–glutamate 150, and arginine 157.

Belongs to the IspF family. In terms of assembly, homotrimer. Requires a divalent metal cation as cofactor.

It carries out the reaction 4-CDP-2-C-methyl-D-erythritol 2-phosphate = 2-C-methyl-D-erythritol 2,4-cyclic diphosphate + CMP. The protein operates within isoprenoid biosynthesis; isopentenyl diphosphate biosynthesis via DXP pathway; isopentenyl diphosphate from 1-deoxy-D-xylulose 5-phosphate: step 4/6. In terms of biological role, involved in the biosynthesis of isopentenyl diphosphate (IPP) and dimethylallyl diphosphate (DMAPP), two major building blocks of isoprenoid compounds. Catalyzes the conversion of 4-diphosphocytidyl-2-C-methyl-D-erythritol 2-phosphate (CDP-ME2P) to 2-C-methyl-D-erythritol 2,4-cyclodiphosphate (ME-CPP) with a corresponding release of cytidine 5-monophosphate (CMP). This Ehrlichia ruminantium (strain Gardel) protein is 2-C-methyl-D-erythritol 2,4-cyclodiphosphate synthase.